A 497-amino-acid polypeptide reads, in one-letter code: PHD finger protein 10 (497 aa).

The disordered stretch occupies residues 1–61; it reads MAAAGPGAAL…SSRSCETSSQ (61 aa). Phosphoserine is present on residues S11, S35, and S49. The tract at residues 88 to 184 is essential to induce neural progenitor proliferation; sequence MLQEQVSEYL…HYKEYSQMQQ (97 aa). Positions 88-294 are SAY; sequence MLQEQVSEYL…PPLDPELPAL (207 aa). A Glycyl lysine isopeptide (Lys-Gly) (interchain with G-Cter in SUMO2) cross-link involves residue K240. S269 carries the post-translational modification Phosphoserine. The segment covering 284–295 has biased composition (low complexity); the sequence is EPPLDPELPALD. The segment at 284-367 is disordered; the sequence is EPPLDPELPA…KRSVLSKSVP (84 aa). The segment at 291–333 is essential to induce neural progenitor proliferation; it reads LPALDSDGDSDDGEDGGGDEKRKNKGTSDSSSGNVSEGDSPPD. S296, S300, S326, and S330 each carry phosphoserine. A compositionally biased stretch (acidic residues) spans 296–307; sequence SDGDSDDGEDGG. Over residues 317-327 the composition is skewed to polar residues; sequence TSDSSSGNVSE. The segment covering 344–358 has biased composition (basic and acidic residues); it reads KSKDKMATPRKDGSK. The segment at 378–435 adopts a PHD-type 1; degenerate zinc-finger fold; sequence LCGICLKGKESNKKGKAESLIHCSQCDNSGHPSCLDMTMELVSMIKTYPWQCMECKTC. Residue K384 forms a Glycyl lysine isopeptide (Lys-Gly) (interchain with G-Cter in SUMO2) linkage. The PHD-type 2; degenerate zinc-finger motif lies at 437–480; the sequence is ICGQPHHEEEMMFCDVCDRGYHTFCVGLGAIPSGRWICDCCQRA.

This sequence belongs to the SAYP family. In terms of assembly, component of neural progenitors-specific chromatin remodeling complex (npBAF complex) composed of at least, ARID1A/BAF250A or ARID1B/BAF250B, SMARCD1/BAF60A, SMARCD3/BAF60C, SMARCA2/BRM/BAF190B, SMARCA4/BRG1/BAF190A, SMARCB1/BAF47, SMARCC1/BAF155, SMARCE1/BAF57, SMARCC2/BAF170, PHF10/BAF45A, ACTL6A/BAF53A and actin. Interacts with ACTL6A/BAF53A, SMARCA2/BRM/BAF190B, SMARCA4/BRG1/BAF190A and PBRM1/BAF180.

The protein resides in the nucleus. Functionally, involved in transcription activity regulation by chromatin remodeling. Belongs to the neural progenitors-specific chromatin remodeling complex (npBAF complex) and is required for the proliferation of neural progenitors. During neural development a switch from a stem/progenitor to a post-mitotic chromatin remodeling mechanism occurs as neurons exit the cell cycle and become committed to their adult state. The transition from proliferating neural stem/progenitor cells to post-mitotic neurons requires a switch in subunit composition of the npBAF and nBAF complexes. As neural progenitors exit mitosis and differentiate into neurons, npBAF complexes which contain ACTL6A/BAF53A and PHF10/BAF45A, are exchanged for homologous alternative ACTL6B/BAF53B and DPF1/BAF45B or DPF3/BAF45C subunits in neuron-specific complexes (nBAF). The npBAF complex is essential for the self-renewal/proliferative capacity of the multipotent neural stem cells. The nBAF complex along with CREST plays a role regulating the activity of genes essential for dendrite growth. This chain is PHD finger protein 10 (Phf10), found in Rattus norvegicus (Rat).